A 411-amino-acid polypeptide reads, in one-letter code: Serpin A3-5 (411 aa).

Positions 1–24 (MRAERTSFLLALGLLMAGIRSVHC) are cleaved as a signal peptide. Asparagine 100, asparagine 180, asparagine 230, asparagine 264, and asparagine 318 each carry an N-linked (GlcNAc...) asparagine glycan.

It belongs to the serpin family. Homodimer.

It localises to the cytoplasmic vesicle. The protein resides in the secretory vesicle. Its subcellular location is the chromaffin granule. The protein localises to the secreted. In terms of biological role, serine protease inhibitor. The protein is Serpin A3-5 of Bos taurus (Bovine).